A 189-amino-acid polypeptide reads, in one-letter code: Resolvase (189 aa).

In terms of domain architecture, Resolvase/invertase-type recombinase catalytic spans 1–139; sequence MLVGYARVST…EGLKSAKARG (139 aa). The active-site O-(5'-phospho-DNA)-serine intermediate is serine 9. Residues 130-151 form a disordered region; it reads EGLKSAKARGRNGGRPSKRNDK. Residues 165–184 constitute a DNA-binding region (H-T-H motif); it reads IVDIVKQTGLSRATVYRVLN.

Belongs to the site-specific recombinase resolvase family.

Its function is as follows. A likely role for the res protein would be to stabilize pIP404 by reducing the number of plasmid multimers resulting from homologous recombination. This chain is Resolvase (res), found in Clostridium perfringens.